Reading from the N-terminus, the 145-residue chain is Transcription antitermination protein NusB (145 aa).

It belongs to the NusB family.

Functionally, involved in transcription antitermination. Required for transcription of ribosomal RNA (rRNA) genes. Binds specifically to the boxA antiterminator sequence of the ribosomal RNA (rrn) operons. The polypeptide is Transcription antitermination protein NusB (Psychromonas ingrahamii (strain DSM 17664 / CCUG 51855 / 37)).